The following is an 877-amino-acid chain: Putative ankyrin repeat protein R748 (877 aa).

ANK repeat units follow at residues 44–74 (IRHICLTGSYNNNQMSIMKILMNKFPKTINV), 79–109 (QNNTYLHQSIFNRHKIFVDFFMNELNDNINY), 115–145 (IGISHLHALVNYGYIDHIETAIIKDPGAIQQ), 202–231 (MGYRAIECAVRYCSTDVIDELISLGFSINE), 243–272 (NNNDLIGFATQIDRLDMVKHLINIGAPIHM), and 282–311 (LVPTCLVVAIKFKRDQCIHYLLNLPESIQA). The tract at residues 525–579 (DSDEDPVCDSNESDNSNDINNHVKSDNKLNSSNDYYDEDDSEDNYNNQSDDEPLV) is disordered. A compositionally biased stretch (low complexity) spans 533–544 (DSNESDNSNDIN).

This is Putative ankyrin repeat protein R748 from Acanthamoeba polyphaga mimivirus (APMV).